The sequence spans 90 residues: Defensin-like protein 293 (90 aa).

An N-terminal signal peptide occupies residues 1 to 26 (MTSRAKSLFIFFFLISCTFMLLETDA). 3 cysteine pairs are disulfide-bonded: Cys63-Cys83, Cys69-Cys88, and Cys75-Cys90.

The protein belongs to the DEFL family.

The protein localises to the secreted. The sequence is that of Defensin-like protein 293 from Arabidopsis thaliana (Mouse-ear cress).